A 398-amino-acid chain; its full sequence is Metalloprotease MmpA (398 aa).

Histidine 22 is a binding site for Zn(2+). Residue glutamate 23 is part of the active site. A Zn(2+)-binding site is contributed by histidine 26. 3 helical membrane-spanning segments follow: residues 117 to 139, 316 to 338, and 362 to 381; these read FIAV…VILV, QFWL…IPVL, and AAGF…FAAW. Residues 130–203 form the PDZ domain; it reads AILVFAVILV…MPIDFAVERD (74 aa).

This sequence belongs to the peptidase M50B family. Requires Zn(2+) as cofactor.

The protein resides in the cell inner membrane. In terms of biological role, involved in the regulated intramembrane proteolysis (RIP) of the short isoform of PodJ protein (PodJS), during the swarmer-to-stalked transition. The cleavage occurs near or within the single transmembrane of PodJS thereby releasing the N-terminal segment into the cytoplasm for subsequent degradation. It contributes to preserve asymmetry in the next cell cycle through sequential degradation. The chain is Metalloprotease MmpA (mmpA) from Caulobacter vibrioides (strain ATCC 19089 / CIP 103742 / CB 15) (Caulobacter crescentus).